The following is a 365-amino-acid chain: Flagellar P-ring protein 2 (365 aa).

Residues 1–19 (MKKWIVMASLLLAALPAMS) form the signal peptide.

The protein belongs to the FlgI family. The basal body constitutes a major portion of the flagellar organelle and consists of four rings (L,P,S, and M) mounted on a central rod.

It localises to the periplasm. The protein resides in the bacterial flagellum basal body. Assembles around the rod to form the L-ring and probably protects the motor/basal body from shearing forces during rotation. In Chromobacterium violaceum (strain ATCC 12472 / DSM 30191 / JCM 1249 / CCUG 213 / NBRC 12614 / NCIMB 9131 / NCTC 9757 / MK), this protein is Flagellar P-ring protein 2.